Reading from the N-terminus, the 134-residue chain is Rhoptry antigen protein (134 aa).

2 disordered regions span residues 21 to 82 (MGPL…SNLK) and 96 to 134 (QLDK…ENEL). The segment covering 29-38 (KSTSAASTSD) has biased composition (polar residues). Residues 39–54 (ELSGSEGPSTESTSTG) show a composition bias toward low complexity. Over residues 57 to 69 (GEDKTTDNTYKEM) the composition is skewed to basic and acidic residues. Positions 102-113 (PKKKKSKRKKKR) are enriched in basic residues. The span at 114 to 126 (DSSSDRILLEESK) shows a compositional bias: basic and acidic residues.

This Plasmodium falciparum protein is Rhoptry antigen protein.